The sequence spans 267 residues: NAD kinase 2 (267 aa).

Aspartate 52 serves as the catalytic Proton acceptor. Residues 52 to 53, 124 to 125, arginine 151, aspartate 153, 164 to 169, and alanine 188 each bind NAD(+); these read DG, NE, and TGYNKS.

The protein belongs to the NAD kinase family. Requires a divalent metal cation as cofactor.

The protein localises to the cytoplasm. It carries out the reaction NAD(+) + ATP = ADP + NADP(+) + H(+). In terms of biological role, involved in the regulation of the intracellular balance of NAD and NADP, and is a key enzyme in the biosynthesis of NADP. Catalyzes specifically the phosphorylation on 2'-hydroxyl of the adenosine moiety of NAD to yield NADP. The protein is NAD kinase 2 of Geobacillus kaustophilus (strain HTA426).